Consider the following 456-residue polypeptide: MSMELTVLGPLAGRSFAIAGKPKLLLLRPTNLPLLRLSLPLSLPNFSSSSRFNSPIVFAAQESNLSVSNENETSEWLMQDFYTLRKDVEIASARVEEIRASANLQQLEQEITNLESKATDTSFWDDRTKAQETLSSLNDLKDRMRLLSEFKTMVEDAETIVKLTEEMDSTDVSLLEEAMGIIKELNKSLDKFELTQLLSGPYDKEGAVVYITAGAGGTDAQDWADMLLRMYMRWGEKQRYKTKVVEMSNGEEAGIKSATLEIEGRYAYGYISGEKGTHRIVRQSPFNSKGLRQTSFSGVEVMPLLPEEAVGIEIPEEDLDISFTRAGGKGGQNVNKVETAVRITHIPTGVAVRCTEERSQLANKTRALIRLKAKLMVIAEEQRATEIKEIRGDAVKAEWGQQIRNYVFHPYKLVKDVRTGHETSDITSVMDGDLDPFIKAYLKHKYTLAMASAVTN.

The N-terminal 58 residues, 1 to 58 (MSMELTVLGPLAGRSFAIAGKPKLLLLRPTNLPLLRLSLPLSLPNFSSSSRFNSPIVF), are a transit peptide targeting the chloroplast.

The protein belongs to the prokaryotic/mitochondrial release factor family. Expressed in leaves, stems and flowers.

The protein localises to the plastid. Its subcellular location is the chloroplast stroma. Its function is as follows. Directs the termination of translation in response to the peptide chain termination codon UGA. Required for the proper translation, stability and normal processing of UGA-containing polycistronic transcripts in chloroplasts. This is Peptide chain release factor PrfB1, chloroplastic from Arabidopsis thaliana (Mouse-ear cress).